A 160-amino-acid polypeptide reads, in one-letter code: Phosphopantetheine adenylyltransferase (160 aa).

Threonine 10 contributes to the substrate binding site. ATP is bound by residues 10-11 (TF) and histidine 18. Substrate is bound by residues lysine 42, methionine 74, and arginine 88. ATP contacts are provided by residues 89 to 91 (GVR), glutamate 99, and 124 to 130 (WSYISST).

Belongs to the bacterial CoaD family. As to quaternary structure, homohexamer. Requires Mg(2+) as cofactor.

The protein localises to the cytoplasm. It catalyses the reaction (R)-4'-phosphopantetheine + ATP + H(+) = 3'-dephospho-CoA + diphosphate. The protein operates within cofactor biosynthesis; coenzyme A biosynthesis; CoA from (R)-pantothenate: step 4/5. Its function is as follows. Reversibly transfers an adenylyl group from ATP to 4'-phosphopantetheine, yielding dephospho-CoA (dPCoA) and pyrophosphate. This chain is Phosphopantetheine adenylyltransferase, found in Sodalis glossinidius (strain morsitans).